The primary structure comprises 307 residues: MTEISDLDRQIEQLRRCELIKESEVKALCAKAREILVEESNVQRVDSPVTVCGDIHGQFYDLKELFRVGGDVPETNYLFMGDFVDRGFYSVETFLLLLALKVRYPDRITLIRGNHESRQITQVYGFYDECLRKYGSVTVWRYCTEIFDYLSLSAIIDGKIFCVHGGLSPSIQTLDQIRTIDRKQEVPHDGPMCDLLWSDPEDTTGWGVSPRGAGYLFGSDVVAQFNAANNIDMICRAHQLVMEGYKWHFNETVLTVWSAPNYCYRCGNVAAILELDEHLQKEFIIFEAAPQETRGIPSKKPVADYFL.

Mn(2+) is bound by residues Asp-54, His-56, Asp-82, and Asn-114. His-115 serves as the catalytic Proton donor. Positions 164 and 238 each coordinate Mn(2+). The residue at position 307 (Leu-307) is a Leucine methyl ester.

It belongs to the PPP phosphatase family. PP-4 (PP-X) subfamily. As to quaternary structure, serine/threonine-protein phosphatase 4 (PP4) occurs in different assemblies of the catalytic and one or more regulatory subunits. Mn(2+) serves as cofactor.

It localises to the cytoplasm. Its subcellular location is the nucleus. It is found in the cytoskeleton. The protein resides in the microtubule organizing center. The protein localises to the centrosome. It catalyses the reaction O-phospho-L-seryl-[protein] + H2O = L-seryl-[protein] + phosphate. The enzyme catalyses O-phospho-L-threonyl-[protein] + H2O = L-threonyl-[protein] + phosphate. Protein phosphatase that regulates many processes such as microtubule organization at centrosomes. The chain is Serine/threonine-protein phosphatase 4 catalytic subunit (ppp4c) from Xenopus laevis (African clawed frog).